The following is an 88-amino-acid chain: UPF0297 protein Ccel_2240 (88 aa).

This sequence belongs to the UPF0297 family.

In Ruminiclostridium cellulolyticum (strain ATCC 35319 / DSM 5812 / JCM 6584 / H10) (Clostridium cellulolyticum), this protein is UPF0297 protein Ccel_2240.